A 267-amino-acid chain; its full sequence is Neuferricin (267 aa).

A signal peptide spans 1–17 (MLKYLVALISMVLAVWT). The Cytochrome b5 heme-binding domain maps to 53–150 (LLTKEQLSLY…RDYTPVGKLI (98 aa)).

It belongs to the cytochrome b5 family. MAPR subfamily.

The protein resides in the secreted. Functionally, heme-binding protein which promotes neuronal but not astrocyte differentiation. The polypeptide is Neuferricin (cyb5d2) (Danio rerio (Zebrafish)).